Reading from the N-terminus, the 346-residue chain is S-adenosylmethionine:tRNA ribosyltransferase-isomerase (346 aa).

Belongs to the QueA family. As to quaternary structure, monomer.

The protein localises to the cytoplasm. The enzyme catalyses 7-aminomethyl-7-carbaguanosine(34) in tRNA + S-adenosyl-L-methionine = epoxyqueuosine(34) in tRNA + adenine + L-methionine + 2 H(+). It participates in tRNA modification; tRNA-queuosine biosynthesis. Its function is as follows. Transfers and isomerizes the ribose moiety from AdoMet to the 7-aminomethyl group of 7-deazaguanine (preQ1-tRNA) to give epoxyqueuosine (oQ-tRNA). The polypeptide is S-adenosylmethionine:tRNA ribosyltransferase-isomerase (Cereibacter sphaeroides (strain KD131 / KCTC 12085) (Rhodobacter sphaeroides)).